A 397-amino-acid polypeptide reads, in one-letter code: Tryptophan synthase beta chain (397 aa).

N6-(pyridoxal phosphate)lysine is present on K87.

This sequence belongs to the TrpB family. Tetramer of two alpha and two beta chains. Pyridoxal 5'-phosphate serves as cofactor.

The enzyme catalyses (1S,2R)-1-C-(indol-3-yl)glycerol 3-phosphate + L-serine = D-glyceraldehyde 3-phosphate + L-tryptophan + H2O. It participates in amino-acid biosynthesis; L-tryptophan biosynthesis; L-tryptophan from chorismate: step 5/5. Its function is as follows. The beta subunit is responsible for the synthesis of L-tryptophan from indole and L-serine. In Escherichia coli O17:K52:H18 (strain UMN026 / ExPEC), this protein is Tryptophan synthase beta chain.